Reading from the N-terminus, the 967-residue chain is Sodium/potassium exporting P-type ATPase 1 (967 aa).

Topologically, residues 1 to 70 (MEGSGDKRHE…GVNPWKILLR (70 aa)) are cytoplasmic. The chain crosses the membrane as a helical span at residues 71-91 (QVSNGLTAVLVVAMVVSFAVK). Asp92 is a topological domain (extracellular). Residues 93–113 (YAEAGVLVIVIAFNTIVGFVQ) form a helical membrane-spanning segment. Over 114–254 (EYRAEKTMDA…TQSTPMQRKL (141 aa)) the chain is Cytoplasmic. Residues 255-275 (NLMAYMLLAFALLLALIVFAV) traverse the membrane as a helical segment. Residues 276-283 (NKFNFSTE) are Extracellular-facing. Residue Asn279 is glycosylated (N-linked (GlcNAc...) asparagine). A helical membrane pass occupies residues 284-304 (VVIYAIALSIAIIPEGLIAVI). Over 305–732 (TIVQALGVRR…GRRIFSNIKK (428 aa)) the chain is Cytoplasmic. The active-site 4-aspartylphosphate intermediate is Asp340. The Mg(2+) site is built by Asp340 and Thr342. Positions 342, 425, 478, 523, 587, 588, 589, 651, and 657 each coordinate ATP. Asp676 provides a ligand contact to Mg(2+). Residue Asn679 participates in ATP binding. The helical transmembrane segment at 733–753 (FVLHLLSTNVGQVIVLLIGLA) threads the bilayer. Topologically, residues 754-812 (FKDRTGTSVFPLSPVQILFLNLVTGTPPAMALGIEPASSSVMQVPPHVKGLFTVELIMD) are extracellular. A helical membrane pass occupies residues 813 to 833 (IFIFGTFIGILALASWVLVIY). Over 834 to 900 (PFGNSDLATL…GGASRFFSNK (67 aa)) the chain is Cytoplasmic. Residues 901–921 (VLVASVFIGALLPIPTIYIGT) form a helical membrane-spanning segment. Residues 922 to 931 (LNTEVFKQEG) lie on the Extracellular side of the membrane. The helical transmembrane segment at 932–952 (ITWEWIIVIVSVFVFFLLSEF) threads the bilayer. Over 953–967 (YKLLKRRFIKTPYNM) the chain is Cytoplasmic.

This sequence belongs to the cation transport ATPase (P-type) (TC 3.A.3) family. Type IID subfamily. The cofactor is Mg(2+). Post-translationally, the active site is phosphorylated in presence of sodium or potassium and in conditions of higher pH. Not phosphorylated in presence of calcium ions.

The protein resides in the cell membrane. The enzyme catalyses Na(+)(in) + ATP + H2O = Na(+)(out) + ADP + phosphate + H(+). The catalysed reaction is K(+)(in) + ATP + H2O = K(+)(out) + ADP + phosphate + H(+). In terms of biological role, catalyzes the hydrolysis of ATP coupled with the export of sodium and potassium from the cell. May pump potassium inefficiently. May transport other cations such as lithium. Sodium/potassium efflux ATPases are involved in salt tolerance and maintaining the membrane potential across the plasma membrane in high salinity (Na+) or alkaline (K+) environments. This Physcomitrium patens (Spreading-leaved earth moss) protein is Sodium/potassium exporting P-type ATPase 1.